A 224-amino-acid chain; its full sequence is Ribosomal RNA large subunit methyltransferase E (224 aa).

S-adenosyl-L-methionine is bound by residues Gly64, Trp66, Asp97, Asp113, and Asp138. Lys178 serves as the catalytic Proton acceptor.

This sequence belongs to the class I-like SAM-binding methyltransferase superfamily. RNA methyltransferase RlmE family.

Its subcellular location is the cytoplasm. It catalyses the reaction uridine(2552) in 23S rRNA + S-adenosyl-L-methionine = 2'-O-methyluridine(2552) in 23S rRNA + S-adenosyl-L-homocysteine + H(+). Specifically methylates the uridine in position 2552 of 23S rRNA at the 2'-O position of the ribose in the fully assembled 50S ribosomal subunit. This Albidiferax ferrireducens (strain ATCC BAA-621 / DSM 15236 / T118) (Rhodoferax ferrireducens) protein is Ribosomal RNA large subunit methyltransferase E.